Here is a 314-residue protein sequence, read N- to C-terminus: Ribosomal protein L11 methyltransferase (314 aa).

Residues threonine 161, glycine 182, aspartate 204, and asparagine 248 each contribute to the S-adenosyl-L-methionine site.

The protein belongs to the methyltransferase superfamily. PrmA family.

It is found in the cytoplasm. The enzyme catalyses L-lysyl-[protein] + 3 S-adenosyl-L-methionine = N(6),N(6),N(6)-trimethyl-L-lysyl-[protein] + 3 S-adenosyl-L-homocysteine + 3 H(+). Functionally, methylates ribosomal protein L11. In Listeria welshimeri serovar 6b (strain ATCC 35897 / DSM 20650 / CCUG 15529 / CIP 8149 / NCTC 11857 / SLCC 5334 / V8), this protein is Ribosomal protein L11 methyltransferase.